The sequence spans 364 residues: Aminomethyltransferase (364 aa).

The protein belongs to the GcvT family. As to quaternary structure, the glycine cleavage system is composed of four proteins: P, T, L and H.

It carries out the reaction N(6)-[(R)-S(8)-aminomethyldihydrolipoyl]-L-lysyl-[protein] + (6S)-5,6,7,8-tetrahydrofolate = N(6)-[(R)-dihydrolipoyl]-L-lysyl-[protein] + (6R)-5,10-methylene-5,6,7,8-tetrahydrofolate + NH4(+). Functionally, the glycine cleavage system catalyzes the degradation of glycine. This is Aminomethyltransferase from Shewanella sediminis (strain HAW-EB3).